Consider the following 199-residue polypeptide: Pectinesterase inhibitor 4 (199 aa).

An N-terminal signal peptide occupies residues 1 to 25 (MLRFVVLSLTLMVFINSSNFPKTAA). N16, N33, N43, and N83 each carry an N-linked (GlcNAc...) asparagine glycan. C42 and C51 are disulfide-bonded. Residues C109 and C158 are joined by a disulfide bond.

Belongs to the PMEI family. As to quaternary structure, binds reversibly to PME3 to inhibit its activity; the stability of the PME3-PMEI4 complex and the inhibition of the pectin methylesterase (PME) activity is pH-dependent, based on protonation status of amino-acids at the complex interface. In terms of tissue distribution, expressed in outer cell layer of roots, particularly in the root-hair zone. Expressed in roots and siliques.

The protein localises to the secreted. The protein resides in the extracellular space. It is found in the apoplast. In terms of biological role, pectin methylesterase (PME) inhibitor that can target the root-expressed PME17 and PME3 in a pH-dependent manner, mainly in slightly acidic conditions (pH 6.3 and 5.0) but not at pH 7.5; this processus relies on changes in the protonation of amino acids involved in intermolecular and intramolecular interactions. Regulate de-methylesterification of pectins in roots and affects root growth. The chain is Pectinesterase inhibitor 4 from Arabidopsis thaliana (Mouse-ear cress).